The sequence spans 880 residues: DNA double-strand break repair Rad50 ATPase (880 aa).

Residues R12, 32–38 (NGSGKSS), and Q138 contribute to the ATP site. 2 coiled-coil regions span residues 225–336 (GELE…VIKE) and 391–744 (GEVI…QALN). The 98-residue stretch at 397–494 (LESLEKERTE…NLRKLEIKLR (98 aa)) folds into the Zinc-hook domain. Zn(2+) is bound by residues C442 and C445. Position 789 to 794 (789 to 794 (FLSGGE)) interacts with ATP.

The protein belongs to the SMC family. RAD50 subfamily. Homodimer. Forms a heterotetramer composed of two Mre11 subunits and two Rad50 subunits. It depends on Zn(2+) as a cofactor.

Its function is as follows. Part of the Rad50/Mre11 complex, which is involved in the early steps of DNA double-strand break (DSB) repair. The complex may facilitate opening of the processed DNA ends to aid in the recruitment of HerA and NurA. Rad50 controls the balance between DNA end bridging and DNA resection via ATP-dependent structural rearrangements of the Rad50/Mre11 complex. The sequence is that of DNA double-strand break repair Rad50 ATPase from Pyrococcus abyssi (strain GE5 / Orsay).